Here is a 543-residue protein sequence, read N- to C-terminus: Glucose-6-phosphate isomerase (543 aa).

The Proton donor role is filled by Glu-353. Active-site residues include His-384 and Lys-512.

The protein belongs to the GPI family.

It localises to the cytoplasm. It catalyses the reaction alpha-D-glucose 6-phosphate = beta-D-fructose 6-phosphate. It participates in carbohydrate biosynthesis; gluconeogenesis. The protein operates within carbohydrate degradation; glycolysis; D-glyceraldehyde 3-phosphate and glycerone phosphate from D-glucose: step 2/4. Catalyzes the reversible isomerization of glucose-6-phosphate to fructose-6-phosphate. The polypeptide is Glucose-6-phosphate isomerase (Christiangramia forsetii (strain DSM 17595 / CGMCC 1.15422 / KT0803) (Gramella forsetii)).